We begin with the raw amino-acid sequence, 256 residues long: Pimeloyl-[acyl-carrier protein] methyl ester esterase (256 aa).

The region spanning 15-242 (HLVLLHGWGL…AAHAPFISHP (228 aa)) is the AB hydrolase-1 domain. Substrate is bound by residues Trp-22, 82–83 (SL), and 143–147 (FLALQ). The active-site Nucleophile is Ser-82. Active-site residues include Asp-207 and His-235. Position 235 (His-235) interacts with substrate.

It belongs to the AB hydrolase superfamily. Carboxylesterase BioH family. In terms of assembly, monomer.

Its subcellular location is the cytoplasm. The enzyme catalyses 6-carboxyhexanoyl-[ACP] methyl ester + H2O = 6-carboxyhexanoyl-[ACP] + methanol + H(+). It functions in the pathway cofactor biosynthesis; biotin biosynthesis. In terms of biological role, the physiological role of BioH is to remove the methyl group introduced by BioC when the pimeloyl moiety is complete. It allows to synthesize pimeloyl-ACP via the fatty acid synthetic pathway through the hydrolysis of the ester bonds of pimeloyl-ACP esters. This Escherichia coli O45:K1 (strain S88 / ExPEC) protein is Pimeloyl-[acyl-carrier protein] methyl ester esterase.